The chain runs to 1188 residues: DNA-directed RNA polymerase subunit beta (1188 aa).

This sequence belongs to the RNA polymerase beta chain family. The RNAP catalytic core consists of 2 alpha, 1 beta, 1 beta' and 1 omega subunit. When a sigma factor is associated with the core the holoenzyme is formed, which can initiate transcription.

The enzyme catalyses RNA(n) + a ribonucleoside 5'-triphosphate = RNA(n+1) + diphosphate. DNA-dependent RNA polymerase catalyzes the transcription of DNA into RNA using the four ribonucleoside triphosphates as substrates. The sequence is that of DNA-directed RNA polymerase subunit beta from Streptococcus equi subsp. zooepidemicus (strain H70).